Consider the following 68-residue polypeptide: Medusin-DA1 (68 aa).

Positions 1–22 (MAFLKKSLFLVLFLGLVSLSVC) are cleaved as a signal peptide. A propeptide spanning residues 23 to 48 (EEEKRENEEEKNEQEEDDREERNEEK) is cleaved from the precursor. Residues 25–47 (EKRENEEEKNEQEEDDREERNEE) are disordered. The span at 31–41 (EEKNEQEEDDR) shows a compositional bias: acidic residues. At leucine 67 the chain carries Leucine amide.

The protein belongs to the frog skin active peptide (FSAP) family. Medusin subfamily. Expressed by the skin glands.

The protein localises to the secreted. Functionally, antimicrobial peptide with activity against Gram-positive bacteria (S.aureus, MIC=32 mg/L) and fungi (C.albicans, MIC=64 mg/L). Shows weak hemolytic activity. The chain is Medusin-DA1 from Agalychnis dacnicolor (Giant Mexican leaf frog).